A 516-amino-acid polypeptide reads, in one-letter code: Gamma-aminobutyrate transaminase 1, mitochondrial (516 aa).

The transit peptide at 1–47 (MVIARGLLRSNASSSSSQAINLLKYVTSTGSLQGHTQNLCDASTRHF) directs the protein to the mitochondrion. Position 171 to 172 (171 to 172 (GS)) interacts with pyridoxal 5'-phosphate. Tyr-204 serves as a coordination point for substrate. Asp-311 contacts pyridoxal 5'-phosphate. Lys-340 serves as a coordination point for substrate. Lys-340 bears the N6-(pyridoxal phosphate)lysine mark.

This sequence belongs to the class-III pyridoxal-phosphate-dependent aminotransferase family. As to expression, expressed in roots, stems and panicles.

It is found in the mitochondrion. It catalyses the reaction 4-aminobutanoate + pyruvate = succinate semialdehyde + L-alanine. The catalysed reaction is 4-aminobutanoate + glyoxylate = succinate semialdehyde + glycine. Transaminase that degrades gamma-amino butyric acid (GABA) and uses pyruvate as amino-group acceptor, but not 2-oxoglutarate. Not involved in the interaction with blast fungus. The polypeptide is Gamma-aminobutyrate transaminase 1, mitochondrial (OSL2) (Oryza sativa subsp. japonica (Rice)).